Here is an 81-residue protein sequence, read N- to C-terminus: Photosystem I iron-sulfur center (81 aa).

4Fe-4S ferredoxin-type domains lie at 2–31 (SHAVKIYDTCIGCTQCVRACPLDVLEMVPW) and 39–68 (IASSPRTEDCVGCKRCETACPTDFLSIRVY). Residues cysteine 11, cysteine 14, cysteine 17, cysteine 21, cysteine 48, cysteine 51, cysteine 54, and cysteine 58 each contribute to the [4Fe-4S] cluster site.

As to quaternary structure, the cyanobacterial PSI reaction center is composed of one copy each of PsaA,B,C,D,E,F,I,J,K,L,M and X, and forms trimeric complexes. Requires [4Fe-4S] cluster as cofactor.

It localises to the cellular thylakoid membrane. The enzyme catalyses reduced [plastocyanin] + hnu + oxidized [2Fe-2S]-[ferredoxin] = oxidized [plastocyanin] + reduced [2Fe-2S]-[ferredoxin]. Its function is as follows. Apoprotein for the two 4Fe-4S centers FA and FB of photosystem I (PSI); essential for photochemical activity. FB is the terminal electron acceptor of PSI, donating electrons to ferredoxin. The C-terminus interacts with PsaA/B/D and helps assemble the protein into the PSI complex. Required for binding of PsaD and PsaE to PSI. PSI is a plastocyanin/cytochrome c6-ferredoxin oxidoreductase, converting photonic excitation into a charge separation, which transfers an electron from the donor P700 chlorophyll pair to the spectroscopically characterized acceptors A0, A1, FX, FA and FB in turn. This chain is Photosystem I iron-sulfur center, found in Prochlorococcus marinus (strain MIT 9211).